Reading from the N-terminus, the 336-residue chain is Glyceraldehyde-3-phosphate dehydrogenase 1 (336 aa).

NAD(+) contacts are provided by residues 13-14 and D35; that span reads RI. S59 carries the phosphoserine modification. R80 provides a ligand contact to NAD(+). S125 is subject to Phosphoserine. D-glyceraldehyde 3-phosphate contacts are provided by residues 151 to 153, T182, 211 to 212, and R234; these read SCT and TG. Residue C152 is the Nucleophile of the active site. An NAD(+)-binding site is contributed by N316.

Belongs to the glyceraldehyde-3-phosphate dehydrogenase family. As to quaternary structure, homotetramer.

The protein resides in the cytoplasm. The enzyme catalyses D-glyceraldehyde 3-phosphate + phosphate + NAD(+) = (2R)-3-phospho-glyceroyl phosphate + NADH + H(+). Its pathway is carbohydrate degradation; glycolysis; pyruvate from D-glyceraldehyde 3-phosphate: step 1/5. The chain is Glyceraldehyde-3-phosphate dehydrogenase 1 (tdh1) from Schizosaccharomyces pombe (strain 972 / ATCC 24843) (Fission yeast).